The chain runs to 298 residues: Tyrosine recombinase XerC (298 aa).

The 87-residue stretch at 2 to 88 (TDLHTDVERY…ALRSFFDWLV (87 aa)) folds into the Core-binding (CB) domain. Residues 109 to 288 (HLPKNIDVDD…DFQHLASVYD (180 aa)) form the Tyr recombinase domain. Catalysis depends on residues arginine 148, lysine 172, histidine 240, arginine 243, and histidine 266. Tyrosine 275 acts as the O-(3'-phospho-DNA)-tyrosine intermediate in catalysis.

This sequence belongs to the 'phage' integrase family. XerC subfamily. Forms a cyclic heterotetrameric complex composed of two molecules of XerC and two molecules of XerD, in which XerC interacts with XerD via its C-terminal region, XerD interacts with XerC via its C-terminal region and so on.

It localises to the cytoplasm. With respect to regulation, ftsK may regulate the catalytic switch between XerC and XerD in the heterotetrameric complex during the two steps of the recombination process. In terms of biological role, site-specific tyrosine recombinase, which acts by catalyzing the cutting and rejoining of the recombining DNA molecules. Binds cooperatively to specific DNA consensus sequences that are separated from XerD binding sites by a short central region, forming the heterotetrameric XerC-XerD complex that recombines DNA substrates. The complex is essential to convert dimers of the bacterial chromosome into monomers to permit their segregation at cell division. It also contributes to the segregational stability of plasmids. In the complex XerC specifically exchanges the top DNA strands. The protein is Tyrosine recombinase XerC of Escherichia coli (strain 55989 / EAEC).